Consider the following 522-residue polypeptide: Neuropeptide FF receptor 2 (522 aa).

The Extracellular segment spans residues 1–147 (MNSFFGTPAA…NYYLHQPQVA (147 aa)). The segment at 25–49 (KEAGRERRALSVQQRGGPAWSGSLE) is disordered. N-linked (GlcNAc...) asparagine glycosylation is found at Asn-110, Asn-122, and Asn-133. A helical transmembrane segment spans residues 148–168 (AIFIISYFLIFFLCMMGNTVV). At 169–184 (CFIVMRNKHMHTVTNL) the chain is on the cytoplasmic side. The chain crosses the membrane as a helical span at residues 185 to 205 (FILNLAISDLLVGIFCMPITL). Residues 206–221 (LDNIIAGWPFGNTMCK) lie on the Extracellular side of the membrane. Cysteines 220 and 308 form a disulfide. A helical transmembrane segment spans residues 222 to 242 (ISGLVQGISVAASVFTLVAIA). Topologically, residues 243–262 (VDRFQCVVYPFKPKLTIKTA) are cytoplasmic. The helical transmembrane segment at 263-283 (FVIIMIIWVLAITIMSPSAVM) threads the bilayer. Residues 284 to 319 (LHVQEEKYYRVRLNSQNKTSPVYWCREDWPNQEMRK) lie on the Extracellular side of the membrane. An N-linked (GlcNAc...) asparagine glycan is attached at Asn-300. The chain crosses the membrane as a helical span at residues 320–340 (IYTTVLFANIYLAPLSLIVIM). Topologically, residues 341–377 (YGRIGISLFRAAVPHTGRKNQEQWHVVSRKKQKIIKM) are cytoplasmic. The helical transmembrane segment at 378 to 398 (LLIVALLFILSWLPLWTLMML) threads the bilayer. The Extracellular segment spans residues 399–413 (SDYADLSPNELQIIN). Residues 414–434 (IYIYPFAHWLAFGNSSVNPII) traverse the membrane as a helical segment. The Cytoplasmic segment spans residues 435 to 522 (YGFFNENFRR…LKETTNSSEI (88 aa)).

Belongs to the G-protein coupled receptor 1 family. Isoform 1 is abundant in placenta. Relatively highly expressed in thymus, testis, and small intestine. Expressed at low levels in several tissues including spleen, prostate, brain, heart, ovary, colon, kidney, lung, liver and pancreas and not expressed in skeletal muscle and leukocytes. Isoform 2 expression is highest in placenta (but at relatively low level compared to isoform 1). Very low level of expression in numerous tissues including adipose tissue and many brain regions. Isoform 3 is expressed in brain and heart and, at lower levels, in kidney, liver, lung and pancreas.

Its subcellular location is the cell membrane. Receptor for NPAF (A-18-F-amide) and NPFF (F-8-F-amide) neuropeptides, also known as morphine-modulating peptides. Can also be activated by a variety of naturally occurring or synthetic FMRF-amide like ligands. This receptor mediates its action by association with G proteins that activate a phosphatidylinositol-calcium second messenger system. The protein is Neuropeptide FF receptor 2 of Homo sapiens (Human).